The chain runs to 123 residues: UPF0102 protein Mflv_4140 (123 aa).

Belongs to the UPF0102 family.

The chain is UPF0102 protein Mflv_4140 from Mycolicibacterium gilvum (strain PYR-GCK) (Mycobacterium gilvum (strain PYR-GCK)).